The primary structure comprises 1476 residues: ABC-type transporter frbG (1476 aa).

The next 5 helical transmembrane spans lie at 26–46, 64–84, 97–117, 122–142, and 146–166; these read LLFE…VLAL, LYYA…VQLI, SIAI…LCHL, SAKP…FDII, and TLWI…GLVL. The N-linked (GlcNAc...) asparagine glycan is linked to Asn244. 4 helical membrane-spanning segments follow: residues 266–286, 302–322, 380–400, and 409–429; these read FLAG…QPFL, AGAT…GIAI, LQTM…TWLL, and IPSV…AVMA. The ABC transmembrane type-1 1 domain occupies 274–553; sequence LALTGFTFAQ…FVHSAVNLML (280 aa). N-linked (GlcNAc...) asparagine glycosylation occurs at Asn464. The next 2 membrane-spanning stretches (helical) occupy residues 487–507 and 533–553; these read CLVF…IIGF and IFAL…NLML. An ABC transporter 1 domain is found at 619 to 845; that stretch reads IQARDTNIGW…VTAHVHNQTS (227 aa). Residue 652–659 coordinates ATP; the sequence is GPTNSGKS. 4 N-linked (GlcNAc...) asparagine glycosylation sites follow: Asn694, Asn776, Asn805, and Asn842. A run of 5 helical transmembrane segments spans residues 898-918, 936-956, 1017-1037, 1121-1141, and 1151-1171; these read AVFL…SIWV, YLLV…GGGS, LFAF…SPFV, LGLV…IVIV, and GFLG…GGFI. One can recognise an ABC transmembrane type-1 2 domain in the interval 898–1179; sequence AVFLALCMAL…FIGGWTGLET (282 aa). An ABC transporter 2 domain is found at 1216 to 1447; sequence IVFDDVTASY…LSSSSPTSSP (232 aa). Asn1235 carries an N-linked (GlcNAc...) asparagine glycan. 1250-1257 is an ATP binding site; sequence GRTGSGKS.

This sequence belongs to the ABC transporter superfamily. ABCC family. Conjugate transporter (TC 3.A.1.208) subfamily.

It is found in the cell membrane. In terms of biological role, ABC-type transporter; part of the gene cluster that mediates the biosynthesis of the antifungal antibiotic FR901469, an inhibitor of beta-1,3-glucansynthase, exerting antifungal activity against the pathogenes Candida albicans and Aspergillus fumigatus. FR901469 is a cyclic depsipeptide containing 12 amino acid residues and a fatty acid chain. Probably involved in the secretion of FR901469. This Dothideomycetidae sp. (strain 11243) (Fungal sp. (strain No.11243)) protein is ABC-type transporter frbG.